Consider the following 331-residue polypeptide: Ketol-acid reductoisomerase (NADP(+)) (331 aa).

In terms of domain architecture, KARI N-terminal Rossmann spans 1–181 (MKMYYDADAD…GGTRAGVIET (181 aa)). NADP(+) contacts are provided by residues 24–27 (YGSQ), Arg47, Ser50, and 82–85 (DEKQ). His107 is an active-site residue. Residue Gly133 coordinates NADP(+). The KARI C-terminal knotted domain occupies 182–327 (TFREETETDL…KKLRAMMPWL (146 aa)). Positions 190, 194, 226, and 230 each coordinate Mg(2+). Substrate is bound at residue Ser251.

The protein belongs to the ketol-acid reductoisomerase family. Requires Mg(2+) as cofactor.

It carries out the reaction (2R)-2,3-dihydroxy-3-methylbutanoate + NADP(+) = (2S)-2-acetolactate + NADPH + H(+). It catalyses the reaction (2R,3R)-2,3-dihydroxy-3-methylpentanoate + NADP(+) = (S)-2-ethyl-2-hydroxy-3-oxobutanoate + NADPH + H(+). The protein operates within amino-acid biosynthesis; L-isoleucine biosynthesis; L-isoleucine from 2-oxobutanoate: step 2/4. It participates in amino-acid biosynthesis; L-valine biosynthesis; L-valine from pyruvate: step 2/4. Functionally, involved in the biosynthesis of branched-chain amino acids (BCAA). Catalyzes an alkyl-migration followed by a ketol-acid reduction of (S)-2-acetolactate (S2AL) to yield (R)-2,3-dihydroxy-isovalerate. In the isomerase reaction, S2AL is rearranged via a Mg-dependent methyl migration to produce 3-hydroxy-3-methyl-2-ketobutyrate (HMKB). In the reductase reaction, this 2-ketoacid undergoes a metal-dependent reduction by NADPH to yield (R)-2,3-dihydroxy-isovalerate. This is Ketol-acid reductoisomerase (NADP(+)) from Heliobacterium modesticaldum (strain ATCC 51547 / Ice1).